The following is a 462-amino-acid chain: Cysteine--tRNA ligase (462 aa).

C29 is a binding site for Zn(2+). The 'HIGH' region motif lies at 31–41; sequence PTVYNHAHIGN. C211, H236, and E240 together coordinate Zn(2+). A 'KMSKS' region motif is present at residues 269–273; it reads KMSKS. ATP is bound at residue K272.

The protein belongs to the class-I aminoacyl-tRNA synthetase family. Monomer. It depends on Zn(2+) as a cofactor.

It localises to the cytoplasm. It catalyses the reaction tRNA(Cys) + L-cysteine + ATP = L-cysteinyl-tRNA(Cys) + AMP + diphosphate. This chain is Cysteine--tRNA ligase, found in Caulobacter sp. (strain K31).